Reading from the N-terminus, the 180-residue chain is Large ribosomal subunit protein uL6 (180 aa).

The protein belongs to the universal ribosomal protein uL6 family. As to quaternary structure, part of the 50S ribosomal subunit.

Functionally, this protein binds to the 23S rRNA, and is important in its secondary structure. It is located near the subunit interface in the base of the L7/L12 stalk, and near the tRNA binding site of the peptidyltransferase center. This is Large ribosomal subunit protein uL6 from Clostridium beijerinckii (strain ATCC 51743 / NCIMB 8052) (Clostridium acetobutylicum).